Consider the following 101-residue polypeptide: Small ribosomal subunit protein uS14 (101 aa).

Positions M1 to N10 are enriched in basic and acidic residues. The disordered stretch occupies residues M1–K23. The segment covering N11–K23 has biased composition (basic residues).

This sequence belongs to the universal ribosomal protein uS14 family. In terms of assembly, part of the 30S ribosomal subunit. Contacts proteins S3 and S10.

In terms of biological role, binds 16S rRNA, required for the assembly of 30S particles and may also be responsible for determining the conformation of the 16S rRNA at the A site. This Rhodopseudomonas palustris (strain BisB5) protein is Small ribosomal subunit protein uS14.